The primary structure comprises 327 residues: Movement protein (327 aa).

Residues 252–311 (DLTREEREKAAQLEMLRKTREVHTQRSAEEMKRRQAELAKDTQRKLAEEAKAVTEKRKNM) are a coiled coil. Disordered stretches follow at residues 271–294 (REVHTQRSAEEMKRRQAELAKDTQ) and 307–327 (KRKNMAGVNSSNIKFGNFDSV). A compositionally biased stretch (polar residues) spans 313–327 (GVNSSNIKFGNFDSV).

It localises to the host cell wall. Its subcellular location is the host cytoplasm. In terms of biological role, transports viral genome to neighboring plant cells directly through plasmosdesmata, without any budding. The movement protein allows efficient cell to cell propagation, by bypassing the host cell wall barrier. The protein is Movement protein of Hordeum vulgare (Barley).